The sequence spans 423 residues: UPF0229 protein Pfl01_5140 (423 aa).

The segment at 83–108 (TAGEHIARPPGGGGGRGPGKAGNSGE) is disordered. Over residues 92-107 (PGGGGGRGPGKAGNSG) the composition is skewed to gly residues.

It belongs to the UPF0229 family.

This is UPF0229 protein Pfl01_5140 from Pseudomonas fluorescens (strain Pf0-1).